We begin with the raw amino-acid sequence, 561 residues long: MSTLLSILSVICSQAIAKAFPNLEDWAPEITPSTKEHFGHYQCNDAMKLARVLKKAPRAIAEAIVAELPQEPFSLIEIAGAGFINFTFSPVFLNQQLEHFKDALKLGFQVSQPKKIIIDFSSPNIAKDMHVGHLRSTIIGDSLARIFSYVGHDVLRLNHIGDWGTAFGMLITYLQENPCDYSDLEDLTSLYKKAYVCFTNDEEFKKRSQQNVVALQAKDPQAIAIWEKICETSEKAFQKIYDILDIVVEKRGESFYNPFLPEIIEDLEKKGLLTVSNDAKCVFHEAFSIPFMVQKSDGGYNYATTDLAAMRYRIEEDHADKIIIVTDLGQSLHFQLLEATAIAAGYLQPGIFSHVGFGLVLDPQGKKLKTRSGENVKLRELLDTAIEKAEEALREHRPELTDEAIQERAPVIGINAIKYSDLSSHRTSDYVFSFEKMLRFEGNTAMFLLYAYVRIQGIKRRLGISQLSLEGPPEIQEPAEELLALTLLRFPEALESTIKELCPHFLTDYLYNLTHKFNGFFRDSHIQDSPYAKSRLFLCALAEQVLATGMHLLGLKTLERL.

Residues proline 123–histidine 133 carry the 'HIGH' region motif.

The protein belongs to the class-I aminoacyl-tRNA synthetase family. In terms of assembly, monomer.

It localises to the cytoplasm. It carries out the reaction tRNA(Arg) + L-arginine + ATP = L-arginyl-tRNA(Arg) + AMP + diphosphate. This is Arginine--tRNA ligase (argS) from Chlamydia pneumoniae (Chlamydophila pneumoniae).